Here is a 470-residue protein sequence, read N- to C-terminus: 3-isopropylmalate dehydratase large subunit (470 aa).

[4Fe-4S] cluster-binding residues include Cys351, Cys411, and Cys414.

It belongs to the aconitase/IPM isomerase family. LeuC type 1 subfamily. In terms of assembly, heterodimer of LeuC and LeuD. [4Fe-4S] cluster serves as cofactor.

The enzyme catalyses (2R,3S)-3-isopropylmalate = (2S)-2-isopropylmalate. Its pathway is amino-acid biosynthesis; L-leucine biosynthesis; L-leucine from 3-methyl-2-oxobutanoate: step 2/4. Functionally, catalyzes the isomerization between 2-isopropylmalate and 3-isopropylmalate, via the formation of 2-isopropylmaleate. In Rhodopseudomonas palustris (strain BisB5), this protein is 3-isopropylmalate dehydratase large subunit.